The primary structure comprises 187 residues: Nucleoside-triphosphatase THEP1 (187 aa).

ATP is bound by residues 9–16 and 100–107; these read GRPGVGKT and LIAIDEIG.

The protein belongs to the THEP1 NTPase family.

The enzyme catalyses a ribonucleoside 5'-triphosphate + H2O = a ribonucleoside 5'-diphosphate + phosphate + H(+). In terms of biological role, has nucleotide phosphatase activity towards ATP, GTP, CTP, TTP and UTP. May hydrolyze nucleoside diphosphates with lower efficiency. In Hyperthermus butylicus (strain DSM 5456 / JCM 9403 / PLM1-5), this protein is Nucleoside-triphosphatase THEP1.